The primary structure comprises 182 residues: MTQYFRALAFFLLLVPATAMACDDWPSWARGACQRVDQIWNEGGNDLYLTGYSWHNRAMYSSDKIRSFNELAWGGGLGKSIYDEDGDWQGLYAMAFLDSHSDIEPIAGYGFQKIGRIGADTRLGIGYTVFLTSRSDIMSRVPFPGILPLVSAGYRDATLYATYIPGGKGNGNVLFMFGRWEF.

An N-terminal signal peptide occupies residues 1 to 21 (MTQYFRALAFFLLLVPATAMA). The N-palmitoyl cysteine moiety is linked to residue cysteine 22. Cysteine 22 carries the S-diacylglycerol cysteine lipid modification. Catalysis depends on residues histidine 55, aspartate 98, and serine 99.

Belongs to the lipid A palmitoyltransferase family. In terms of assembly, homodimer.

It is found in the cell outer membrane. The catalysed reaction is a lipid A + a 1,2-diacyl-sn-glycero-3-phosphocholine = a hepta-acyl lipid A + a 2-acyl-sn-glycero-3-phosphocholine. It catalyses the reaction a lipid IVA + a 1,2-diacyl-sn-glycero-3-phosphocholine = a lipid IVB + a 2-acyl-sn-glycero-3-phosphocholine. The enzyme catalyses a lipid IIA + a 1,2-diacyl-sn-glycero-3-phosphocholine = a lipid IIB + a 2-acyl-sn-glycero-3-phosphocholine. Its function is as follows. Transfers a fatty acid residue from the sn-1 position of a phospholipid to the N-linked hydroxyfatty acid chain on the proximal unit of lipid A or its precursors. In Bordetella parapertussis (strain 12822 / ATCC BAA-587 / NCTC 13253), this protein is Lipid A acyltransferase PagP.